We begin with the raw amino-acid sequence, 110 residues long: Large ribosomal subunit protein uL22 (110 aa).

It belongs to the universal ribosomal protein uL22 family. In terms of assembly, part of the 50S ribosomal subunit.

This protein binds specifically to 23S rRNA; its binding is stimulated by other ribosomal proteins, e.g. L4, L17, and L20. It is important during the early stages of 50S assembly. It makes multiple contacts with different domains of the 23S rRNA in the assembled 50S subunit and ribosome. Functionally, the globular domain of the protein is located near the polypeptide exit tunnel on the outside of the subunit, while an extended beta-hairpin is found that lines the wall of the exit tunnel in the center of the 70S ribosome. The chain is Large ribosomal subunit protein uL22 from Maridesulfovibrio salexigens (strain ATCC 14822 / DSM 2638 / NCIMB 8403 / VKM B-1763) (Desulfovibrio salexigens).